The chain runs to 652 residues: DNA ligase (652 aa).

NAD(+) contacts are provided by residues 29 to 33 (DSQYD), 78 to 79 (SL), and Glu-107. The active-site N6-AMP-lysine intermediate is Lys-109. 4 residues coordinate NAD(+): Arg-130, Glu-164, Lys-278, and Lys-302. Positions 395, 398, 413, and 418 each coordinate Zn(2+). Residues 577–652 (STDAQLSGLT…IQDEDWLLNL (76 aa)) enclose the BRCT domain.

Belongs to the NAD-dependent DNA ligase family. LigA subfamily. It depends on Mg(2+) as a cofactor. Requires Mn(2+) as cofactor.

It carries out the reaction NAD(+) + (deoxyribonucleotide)n-3'-hydroxyl + 5'-phospho-(deoxyribonucleotide)m = (deoxyribonucleotide)n+m + AMP + beta-nicotinamide D-nucleotide.. DNA ligase that catalyzes the formation of phosphodiester linkages between 5'-phosphoryl and 3'-hydroxyl groups in double-stranded DNA using NAD as a coenzyme and as the energy source for the reaction. It is essential for DNA replication and repair of damaged DNA. The sequence is that of DNA ligase from Streptococcus agalactiae serotype III (strain NEM316).